A 357-amino-acid chain; its full sequence is S-adenosylmethionine:tRNA ribosyltransferase-isomerase (357 aa).

It belongs to the QueA family. Monomer.

Its subcellular location is the cytoplasm. It carries out the reaction 7-aminomethyl-7-carbaguanosine(34) in tRNA + S-adenosyl-L-methionine = epoxyqueuosine(34) in tRNA + adenine + L-methionine + 2 H(+). It participates in tRNA modification; tRNA-queuosine biosynthesis. Its function is as follows. Transfers and isomerizes the ribose moiety from AdoMet to the 7-aminomethyl group of 7-deazaguanine (preQ1-tRNA) to give epoxyqueuosine (oQ-tRNA). The chain is S-adenosylmethionine:tRNA ribosyltransferase-isomerase from Edwardsiella ictaluri (strain 93-146).